Consider the following 171-residue polypeptide: Shikimate kinase (171 aa).

Glycine 14–threonine 19 is an ATP binding site. Serine 18 is a Mg(2+) binding site. Substrate-binding residues include aspartate 36, arginine 60, and glycine 82. Arginine 120 serves as a coordination point for ATP. Arginine 139 provides a ligand contact to substrate. Glutamine 156 lines the ATP pocket.

It belongs to the shikimate kinase family. Monomer. It depends on Mg(2+) as a cofactor.

The protein localises to the cytoplasm. The enzyme catalyses shikimate + ATP = 3-phosphoshikimate + ADP + H(+). It participates in metabolic intermediate biosynthesis; chorismate biosynthesis; chorismate from D-erythrose 4-phosphate and phosphoenolpyruvate: step 5/7. In terms of biological role, catalyzes the specific phosphorylation of the 3-hydroxyl group of shikimic acid using ATP as a cosubstrate. This Pseudoalteromonas atlantica (strain T6c / ATCC BAA-1087) protein is Shikimate kinase.